The chain runs to 83 residues: Cytochrome b559 subunit alpha (83 aa).

Residues 21-35 (VIHSITIPSLFIAGW) form a helical membrane-spanning segment. A heme-binding site is contributed by His-23.

The protein belongs to the PsbE/PsbF family. As to quaternary structure, heterodimer of an alpha subunit and a beta subunit. PSII is composed of 1 copy each of membrane proteins PsbA, PsbB, PsbC, PsbD, PsbE, PsbF, PsbH, PsbI, PsbJ, PsbK, PsbL, PsbM, PsbT, PsbX, PsbY, PsbZ, Psb30/Ycf12, at least 3 peripheral proteins of the oxygen-evolving complex and a large number of cofactors. It forms dimeric complexes. It depends on heme b as a cofactor.

The protein resides in the plastid. It is found in the chloroplast thylakoid membrane. Its function is as follows. This b-type cytochrome is tightly associated with the reaction center of photosystem II (PSII). PSII is a light-driven water:plastoquinone oxidoreductase that uses light energy to abstract electrons from H(2)O, generating O(2) and a proton gradient subsequently used for ATP formation. It consists of a core antenna complex that captures photons, and an electron transfer chain that converts photonic excitation into a charge separation. The sequence is that of Cytochrome b559 subunit alpha from Acorus calamus (Sweet flag).